Reading from the N-terminus, the 402-residue chain is MALKSGEERLKEMEAEMALFEQEVLGGPVAPTVVEAVPVALAMPTLPMVRPIIGTNTYREVQQSLEARAATLVGPPPTFVCPAIPAVPPPQVLRPAFVPHVLQRPAGGHRMPMMRGPPPHGMIAPPLPRPPPPPPSMMAPPVVGPPQPPMAPVGPPMGPMPPVGGMNPMALGPPRSMTQAPAKITPSVIQAAPTVYTAPPVSKRIDLKSQKQARMEQLSALVAEQQAAVLAAGLLDSKKETASDDSVIGPSMPEPEPVHVEPVDTSTEDKKKGKQEKVKKCIRVAAGVSWEDTSLLEWETDDFRIFCGDLGNEVNDDILARAFSRYPSFLKAKVVRDKRTGKTKGYGFVSFKDPNDYVRAMREMNGRYVGSRPIKLRKSAWKDRNLEVVRKNQKEKKKLGLR.

The interval 240 to 275 (ETASDDSVIGPSMPEPEPVHVEPVDTSTEDKKKGKQ) is disordered. Over residues 256 to 275 (EPVHVEPVDTSTEDKKKGKQ) the composition is skewed to basic and acidic residues. An RRM domain is found at 303–381 (FRIFCGDLGN…RPIKLRKSAW (79 aa)).

Belongs to the RRM RBM42 family.

It localises to the nucleus. The protein localises to the cytoplasm. Its function is as follows. May bind RNA. In Danio rerio (Zebrafish), this protein is RNA-binding protein 42 (rbm42).